The primary structure comprises 425 residues: Dihydroorotase (425 aa).

Positions 56 and 58 each coordinate Zn(2+). Residues His-58–Arg-60 and Asn-90 contribute to the substrate site. Zn(2+) is bound by residues Asp-148, His-175, and His-228. A substrate-binding site is contributed by Asn-274. Asp-301 serves as a coordination point for Zn(2+). Asp-301 is an active-site residue. Substrate is bound by residues His-305 and Phe-319–Gly-320.

Belongs to the metallo-dependent hydrolases superfamily. DHOase family. Class I DHOase subfamily. Zn(2+) serves as cofactor.

The enzyme catalyses (S)-dihydroorotate + H2O = N-carbamoyl-L-aspartate + H(+). It functions in the pathway pyrimidine metabolism; UMP biosynthesis via de novo pathway; (S)-dihydroorotate from bicarbonate: step 3/3. Catalyzes the reversible cyclization of carbamoyl aspartate to dihydroorotate. The chain is Dihydroorotase from Lactobacillus johnsonii (strain CNCM I-12250 / La1 / NCC 533).